Consider the following 199-residue polypeptide: Adult-specific cuticular protein ACP-22 (199 aa).

The first 19 residues, 1–19, serve as a signal peptide directing secretion; it reads MRLFIILSVASFGAIGVLS. Residues 63 to 103 form a disordered region; sequence GGGGGGGGEGEEGREHELRGGGLELGGGGGGGGGGGGGGGE. The span at 82–102 shows a compositional bias: gly residues; the sequence is GGGLELGGGGGGGGGGGGGGG. The Chitin-binding type R&amp;R domain maps to 133 to 199; the sequence is HPEYHSDYHV…IARVSYRKHH (67 aa).

As to expression, epidermal regions synthesizing hard cuticle.

Functionally, cuticular proteins play a significant role in determining the physical properties of cuticles. The chain is Adult-specific cuticular protein ACP-22 (ACP22) from Tenebrio molitor (Yellow mealworm beetle).